A 310-amino-acid polypeptide reads, in one-letter code: Glycerol-3-phosphate dehydrogenase [NAD(P)+] (310 aa).

NADPH contacts are provided by W14, R34, R35, and K82. 2 residues coordinate sn-glycerol 3-phosphate: K82 and G110. S114 serves as a coordination point for NADPH. 5 residues coordinate sn-glycerol 3-phosphate: K165, D218, S228, R229, and N230. The active-site Proton acceptor is the K165. Position 229 (R229) interacts with NADPH. E255 provides a ligand contact to NADPH.

This sequence belongs to the NAD-dependent glycerol-3-phosphate dehydrogenase family.

It localises to the cytoplasm. The enzyme catalyses sn-glycerol 3-phosphate + NAD(+) = dihydroxyacetone phosphate + NADH + H(+). It catalyses the reaction sn-glycerol 3-phosphate + NADP(+) = dihydroxyacetone phosphate + NADPH + H(+). The protein operates within membrane lipid metabolism; glycerophospholipid metabolism. Catalyzes the reduction of the glycolytic intermediate dihydroxyacetone phosphate (DHAP) to sn-glycerol 3-phosphate (G3P), the key precursor for phospholipid synthesis. This chain is Glycerol-3-phosphate dehydrogenase [NAD(P)+], found in Acaryochloris marina (strain MBIC 11017).